The chain runs to 537 residues: Mitochondrial distribution and morphology protein 34 (537 aa).

Residues 1–195 (MAFNFNWSPL…LPAIIHRLSL (195 aa)) form the SMP-LTD domain. Disordered stretches follow at residues 320 to 339 (YTFSDNGSQDQGSLPSRPSL), 348 to 403 (GLSL…IMPH), 421 to 493 (GRSP…DTSS), and 516 to 537 (KNGNPTFWDDQDDTPPPAYEAR). A compositionally biased stretch (basic residues) spans 355-371 (RHSKAGRKKKTRVVNLR). A compositionally biased stretch (acidic residues) spans 378–391 (ANSEEEEDTPETDS). Polar residues predominate over residues 425-441 (DLQQQPRRPSFRAQATN).

The protein belongs to the MDM34 family. In terms of assembly, component of the ER-mitochondria encounter structure (ERMES) or MDM complex, composed of MMM1, MDM10, MDM12 and MDM34.

It localises to the mitochondrion outer membrane. Component of the ERMES/MDM complex, which serves as a molecular tether to connect the endoplasmic reticulum (ER) and mitochondria. Components of this complex are involved in the control of mitochondrial shape and protein biogenesis, and function in nonvesicular lipid trafficking between the ER and mitochondria. MDM34 is required for the interaction of the ER-resident membrane protein MMM1 and the outer mitochondrial membrane-resident beta-barrel protein MDM10. This Chaetomium globosum (strain ATCC 6205 / CBS 148.51 / DSM 1962 / NBRC 6347 / NRRL 1970) (Soil fungus) protein is Mitochondrial distribution and morphology protein 34.